The sequence spans 511 residues: 2-isopropylmalate synthase (511 aa).

In terms of domain architecture, Pyruvate carboxyltransferase spans 6–269 (IIIFDTTLRD…YTDIKCENIF (264 aa)). Mn(2+)-binding residues include D15, H203, H205, and N239. The interval 394-511 (VLEKLSVISG…SLKVEERKMA (118 aa)) is regulatory domain.

This sequence belongs to the alpha-IPM synthase/homocitrate synthase family. LeuA type 1 subfamily. Homodimer. The cofactor is Mn(2+).

Its subcellular location is the cytoplasm. The catalysed reaction is 3-methyl-2-oxobutanoate + acetyl-CoA + H2O = (2S)-2-isopropylmalate + CoA + H(+). The protein operates within amino-acid biosynthesis; L-leucine biosynthesis; L-leucine from 3-methyl-2-oxobutanoate: step 1/4. Its function is as follows. Catalyzes the condensation of the acetyl group of acetyl-CoA with 3-methyl-2-oxobutanoate (2-ketoisovalerate) to form 3-carboxy-3-hydroxy-4-methylpentanoate (2-isopropylmalate). The sequence is that of 2-isopropylmalate synthase from Campylobacter jejuni subsp. jejuni serotype O:2 (strain ATCC 700819 / NCTC 11168).